The chain runs to 111 residues: uncharacterized protein (111 aa).

Its subcellular location is the mitochondrion. This is an uncharacterized protein from Arabidopsis thaliana (Mouse-ear cress).